We begin with the raw amino-acid sequence, 143 residues long: Peptide methionine sulfoxide reductase MsrB (143 aa).

One can recognise a MsrB domain in the interval 16-139; the sequence is DAELRRRLTP…NSAALNFESR (124 aa). C55, C58, C104, and C107 together coordinate Zn(2+). Residue C128 is the Nucleophile of the active site.

This sequence belongs to the MsrB Met sulfoxide reductase family. Requires Zn(2+) as cofactor.

The catalysed reaction is L-methionyl-[protein] + [thioredoxin]-disulfide + H2O = L-methionyl-(R)-S-oxide-[protein] + [thioredoxin]-dithiol. This is Peptide methionine sulfoxide reductase MsrB from Burkholderia ambifaria (strain MC40-6).